The following is a 516-amino-acid chain: Maturase K (516 aa).

This sequence belongs to the intron maturase 2 family. MatK subfamily.

It is found in the plastid. It localises to the chloroplast. Functionally, usually encoded in the trnK tRNA gene intron. Probably assists in splicing its own and other chloroplast group II introns. This chain is Maturase K, found in Chara vulgaris (Common stonewort).